A 233-amino-acid polypeptide reads, in one-letter code: Biosynthetic peptidoglycan transglycosylase (233 aa).

The chain crosses the membrane as a helical span at residues 8-28; the sequence is LIALPVGIFIFFNAYVYGNII.

The protein belongs to the glycosyltransferase 51 family.

It is found in the cell inner membrane. It carries out the reaction [GlcNAc-(1-&gt;4)-Mur2Ac(oyl-L-Ala-gamma-D-Glu-L-Lys-D-Ala-D-Ala)](n)-di-trans,octa-cis-undecaprenyl diphosphate + beta-D-GlcNAc-(1-&gt;4)-Mur2Ac(oyl-L-Ala-gamma-D-Glu-L-Lys-D-Ala-D-Ala)-di-trans,octa-cis-undecaprenyl diphosphate = [GlcNAc-(1-&gt;4)-Mur2Ac(oyl-L-Ala-gamma-D-Glu-L-Lys-D-Ala-D-Ala)](n+1)-di-trans,octa-cis-undecaprenyl diphosphate + di-trans,octa-cis-undecaprenyl diphosphate + H(+). The protein operates within cell wall biogenesis; peptidoglycan biosynthesis. Functionally, peptidoglycan polymerase that catalyzes glycan chain elongation from lipid-linked precursors. The polypeptide is Biosynthetic peptidoglycan transglycosylase (Neisseria meningitidis serogroup A / serotype 4A (strain DSM 15465 / Z2491)).